The sequence spans 1381 residues: DNA-directed RNA polymerase subunit beta'' (1381 aa).

Zn(2+)-binding residues include Cys224, Cys295, Cys302, and Cys305.

Belongs to the RNA polymerase beta' chain family. RpoC2 subfamily. As to quaternary structure, in plastids the minimal PEP RNA polymerase catalytic core is composed of four subunits: alpha, beta, beta', and beta''. When a (nuclear-encoded) sigma factor is associated with the core the holoenzyme is formed, which can initiate transcription. The cofactor is Zn(2+).

The protein localises to the plastid. Its subcellular location is the chloroplast. The catalysed reaction is RNA(n) + a ribonucleoside 5'-triphosphate = RNA(n+1) + diphosphate. Its function is as follows. DNA-dependent RNA polymerase catalyzes the transcription of DNA into RNA using the four ribonucleoside triphosphates as substrates. The sequence is that of DNA-directed RNA polymerase subunit beta'' from Guizotia abyssinica (Niger).